The sequence spans 906 residues: Protein translocase subunit SecA (906 aa).

ATP is bound by residues Gln86, 104 to 108 (GEGKT), and Asp511. 2 stretches are compositionally biased toward basic and acidic residues: residues 853–865 (HESVIDNNQRHDE) and 877–888 (VRREGPKVKRND). The interval 853–906 (HESVIDNNQRHDEDEQEEAPKVQQVRREGPKVKRNDPCPCGSGKKYKQCHGKVE) is disordered. Residues Cys890, Cys892, Cys901, and His902 each contribute to the Zn(2+) site. The span at 896–906 (KKYKQCHGKVE) shows a compositional bias: basic residues.

Belongs to the SecA family. As to quaternary structure, monomer and homodimer. Part of the essential Sec protein translocation apparatus which comprises SecA, SecYEG and auxiliary proteins SecDF-YajC and YidC. It depends on Zn(2+) as a cofactor.

Its subcellular location is the cell inner membrane. It is found in the cytoplasm. It catalyses the reaction ATP + H2O + cellular proteinSide 1 = ADP + phosphate + cellular proteinSide 2.. Part of the Sec protein translocase complex. Interacts with the SecYEG preprotein conducting channel. Has a central role in coupling the hydrolysis of ATP to the transfer of proteins into and across the cell membrane, serving both as a receptor for the preprotein-SecB complex and as an ATP-driven molecular motor driving the stepwise translocation of polypeptide chains across the membrane. The polypeptide is Protein translocase subunit SecA (Francisella tularensis subsp. holarctica (strain FTNF002-00 / FTA)).